The chain runs to 1020 residues: Inner tegument protein (1020 aa).

The interval 539–1020 (WGVRIPDRDT…EIDAIFNNTK (482 aa)) is interaction with large tegument protein.

This sequence belongs to the herpesviridae inner tegument protein family. As to quaternary structure, interacts (via C-terminus) with the large tegument protein/LTP (via N-terminus).

The protein resides in the virion tegument. Its subcellular location is the host cytoplasm. The protein localises to the host nucleus. It localises to the host Golgi apparatus. It is found in the host trans-Golgi network. Functionally, plays an essential role in cytoplasmic secondary envelopment during viral egress. Interacts with the capsid via the large tegument protein/LTP and participates in its transport to the host trans-Golgi network (TGN) where secondary envelopment occurs. Modulates tegumentation and capsid accumulation at the viral assembly complex. The sequence is that of Inner tegument protein from Equine herpesvirus 1 (strain Ab4p) (EHV-1).